A 625-amino-acid chain; its full sequence is Threonine--tRNA ligase (625 aa).

Residues Met-1 to Arg-149 are editing domain. Catalytic regions lie at residues Asn-197 to Pro-494 and Pro-198 to Pro-494. Positions 291, 342, and 463 each coordinate Zn(2+).

The protein belongs to the class-II aminoacyl-tRNA synthetase family. In terms of assembly, homodimer. It depends on Zn(2+) as a cofactor.

The protein localises to the cytoplasm. The catalysed reaction is tRNA(Thr) + L-threonine + ATP = L-threonyl-tRNA(Thr) + AMP + diphosphate + H(+). Catalyzes the attachment of threonine to tRNA(Thr) in a two-step reaction: L-threonine is first activated by ATP to form Thr-AMP and then transferred to the acceptor end of tRNA(Thr). Also edits incorrectly charged L-seryl-tRNA(Thr). The sequence is that of Threonine--tRNA ligase from Hyperthermus butylicus (strain DSM 5456 / JCM 9403 / PLM1-5).